The sequence spans 241 residues: Small ribosomal subunit protein uS2 (241 aa).

The protein belongs to the universal ribosomal protein uS2 family.

This is Small ribosomal subunit protein uS2 from Pectobacterium atrosepticum (strain SCRI 1043 / ATCC BAA-672) (Erwinia carotovora subsp. atroseptica).